A 408-amino-acid polypeptide reads, in one-letter code: LL-diaminopimelate aminotransferase (408 aa).

Positions 15 and 42 each coordinate substrate. Pyridoxal 5'-phosphate is bound by residues Tyr-72, 108–109 (SK), Tyr-132, Asn-187, Tyr-218, and 246–248 (SFS). Residues Lys-109, Tyr-132, and Asn-187 each contribute to the substrate site. Lys-249 bears the N6-(pyridoxal phosphate)lysine mark. Pyridoxal 5'-phosphate-binding residues include Arg-257 and Asn-292. 2 residues coordinate substrate: Asn-292 and Arg-388.

The protein belongs to the class-I pyridoxal-phosphate-dependent aminotransferase family. LL-diaminopimelate aminotransferase subfamily. In terms of assembly, homodimer. Pyridoxal 5'-phosphate is required as a cofactor.

It carries out the reaction (2S,6S)-2,6-diaminopimelate + 2-oxoglutarate = (S)-2,3,4,5-tetrahydrodipicolinate + L-glutamate + H2O + H(+). The protein operates within amino-acid biosynthesis; L-lysine biosynthesis via DAP pathway; LL-2,6-diaminopimelate from (S)-tetrahydrodipicolinate (aminotransferase route): step 1/1. In terms of biological role, involved in the synthesis of meso-diaminopimelate (m-DAP or DL-DAP), required for both lysine and peptidoglycan biosynthesis. Catalyzes the direct conversion of tetrahydrodipicolinate to LL-diaminopimelate. In Prochlorococcus marinus (strain AS9601), this protein is LL-diaminopimelate aminotransferase.